Reading from the N-terminus, the 30-residue chain is Trypsin inhibitor 3 (30 aa).

Gln-1 is subject to Pyrrolidone carboxylic acid. 3 cysteine pairs are disulfide-bonded: Cys-4/Cys-21, Cys-11/Cys-23, and Cys-17/Cys-29.

It is found in the secreted. In terms of biological role, inhibits trypsin; probably participates in a plant defense mechanism. This is Trypsin inhibitor 3 from Momordica cochinchinensis (Spiny bitter cucumber).